The following is a 90-amino-acid chain: Small ribosomal subunit protein bS18 (90 aa).

The protein belongs to the bacterial ribosomal protein bS18 family. In terms of assembly, part of the 30S ribosomal subunit. Forms a tight heterodimer with protein bS6.

In terms of biological role, binds as a heterodimer with protein bS6 to the central domain of the 16S rRNA, where it helps stabilize the platform of the 30S subunit. In Bordetella petrii (strain ATCC BAA-461 / DSM 12804 / CCUG 43448), this protein is Small ribosomal subunit protein bS18.